The following is a 937-amino-acid chain: MORC family CW-type zinc finger protein 4 (937 aa).

A CW-type zinc finger spans residues 420–472 (KVPDQTWVQCDECLKWRKLPGKIDPSMLPARWFCYYNSHPKYRRCSVPEEQEL). Zn(2+) is bound by residues C429, C432, C453, and C464. A disordered region spans residues 606–637 (PEGENSHDKSSSERSTPPYLFPEYPEASKNTG). Positions 762-876 (KLKNQRELEE…LEMLQKAQVS (115 aa)) form a coiled coil.

As to expression, expressed at low levels in normal tissues, with highest expression levels in placenta and testis. Expression is significantly increased in subset of diffuse large B-cell lymphomas.

It is found in the nucleus. Its function is as follows. Histone methylation reader which binds to non-methylated (H3K4me0), monomethylated (H3K4me1), dimethylated (H3K4me2) and trimethylated (H3K4me3) 'Lys-4' on histone H3. The order of binding preference is H3K4me3 &gt; H3K4me2 &gt; H3K4me1 &gt; H3K4me0. The polypeptide is MORC family CW-type zinc finger protein 4 (MORC4) (Homo sapiens (Human)).